The primary structure comprises 329 residues: Catabolite control protein A (329 aa).

The HTH lacI-type domain occupies 1–57 (MTVTIYDVAREARVSMATVSRVVNGNQNVKPETRDKVNEVIKKLNYRPNAVARGLAS). The segment at residues 5–24 (IYDVAREARVSMATVSRVVN) is a DNA-binding region (H-T-H motif).

Global transcriptional regulator of carbon catabolite repression (CCR) and carbon catabolite activation (CCA), which ensures optimal energy usage under diverse conditions. The sequence is that of Catabolite control protein A (ccpA) from Staphylococcus xylosus.